The following is a 475-amino-acid chain: Tubulin epsilon chain (475 aa).

Residue 148-154 (GGGTGSG) participates in GTP binding.

Belongs to the tubulin family. Found in a complex with TEDC1, TEDC2, TUBE1 and TUBD1.

The protein localises to the cytoplasm. Its subcellular location is the cytoskeleton. It is found in the microtubule organizing center. It localises to the centrosome. The polypeptide is Tubulin epsilon chain (Tube1) (Mus musculus (Mouse)).